The sequence spans 1594 residues: THO complex subunit 2 (1594 aa).

The segment at M1–N163 is anchor domain; interaction with THOC5 and THOC7. The bow domain; interaction with THOC1 dock domain and THOC3 stretch occupies residues L164–G534. The MIF4G domain; interaction with THOC3 and DDX39B stretch occupies residues H535–M686. Positions A687–K1174 are stern domain. The stretch at H896–L965 forms a coiled coil. A Nuclear localization signal motif is present at residues K923–K928. Positions S1175 to R1594 are charged domain. 2 stretches are compositionally biased toward basic and acidic residues: residues E1183–P1192 and K1218–S1234. Residues E1183–R1594 form a disordered region. Position 1222 is a phosphoserine (S1222). The span at G1251–K1264 shows a compositional bias: low complexity. Composition is skewed to basic and acidic residues over residues A1265 to T1285, A1294 to K1343, and S1353 to E1383. T1385 carries the phosphothreonine modification. A phosphoserine mark is found at S1390, S1393, S1417, S1450, S1486, and S1516. Positions P1416–K1425 are enriched in polar residues. The span at K1449–N1504 shows a compositional bias: basic and acidic residues. Residues R1464 to E1491 adopt a coiled-coil conformation. The segment covering N1524–E1583 has biased composition (basic and acidic residues). Positions K1584–R1594 are enriched in basic residues.

Belongs to the THOC2 family. Component of the THO subcomplex, which is composed of THOC1, THOC2, THOC3, THOC5, THOC6 and THOC7. The THO subcomplex interacts with DDX39B to form the THO-DDX39B complex which multimerizes into a 28-subunit tetrameric assembly. Component of the transcription/export (TREX) complex at least composed of ALYREF/THOC4, DDX39B, SARNP/CIP29, CHTOP and the THO subcomplex; in the complex interacts with THOC1, THOC3, THOC5, THOC7 and DDX39B. TREX seems to have a dynamic structure involving ATP-dependent remodeling. Interacts with POLDIP3. Interacts with ZC3H11A. As to expression, expressed in the hippocampus and the cortical neurons.

The protein resides in the nucleus. It is found in the nucleus speckle. It localises to the cytoplasm. Functionally, component of the THO subcomplex of the TREX complex which is thought to couple mRNA transcription, processing and nuclear export, and which specifically associates with spliced mRNA and not with unspliced pre-mRNA. Required for efficient export of polyadenylated RNA and spliced mRNA. The THOC1-THOC2-THOC3 core complex alone is sufficient to bind export factor NXF1-NXT1 and promote ATPase activity of DDX39B; in the complex THOC2 is the only component that directly interacts with DDX39B. TREX is recruited to spliced mRNAs by a transcription-independent mechanism, binds to mRNA upstream of the exon-junction complex (EJC) and is recruited in a splicing- and cap-dependent manner to a region near the 5' end of the mRNA where it functions in mRNA export to the cytoplasm via the TAP/NXF1 pathway. Required for NXF1 localization to the nuclear rim. THOC2 (and probably the THO complex) is involved in releasing mRNA from nuclear speckle domains. Plays a role for proper neuronal development. This Mus musculus (Mouse) protein is THO complex subunit 2 (Thoc2).